The primary structure comprises 311 residues: Aspartate carbamoyltransferase catalytic subunit (311 aa).

Carbamoyl phosphate contacts are provided by Arg-55 and Thr-56. Lys-85 is an L-aspartate binding site. Residues Arg-106, His-135, and Gln-138 each contribute to the carbamoyl phosphate site. Residues Arg-168 and Arg-230 each coordinate L-aspartate. Leu-268 and Pro-269 together coordinate carbamoyl phosphate.

The protein belongs to the aspartate/ornithine carbamoyltransferase superfamily. ATCase family. Heterododecamer (2C3:3R2) of six catalytic PyrB chains organized as two trimers (C3), and six regulatory PyrI chains organized as three dimers (R2).

It carries out the reaction carbamoyl phosphate + L-aspartate = N-carbamoyl-L-aspartate + phosphate + H(+). It functions in the pathway pyrimidine metabolism; UMP biosynthesis via de novo pathway; (S)-dihydroorotate from bicarbonate: step 2/3. Catalyzes the condensation of carbamoyl phosphate and aspartate to form carbamoyl aspartate and inorganic phosphate, the committed step in the de novo pyrimidine nucleotide biosynthesis pathway. This chain is Aspartate carbamoyltransferase catalytic subunit, found in Salmonella dublin (strain CT_02021853).